Here is a 280-residue protein sequence, read N- to C-terminus: MTFSTQIKAELVQNKLIDKHWNVFLAGFFQNNLKLLYNRNWSFKVQSEALKEQFVQNLKFDFKTKASKKYFLFEFNADINVINTLLKLDVTTSELVVKQVYLIAAFLSGGSVSDLINSNNFHLQISSNNEFQIQQLLKLFSFFKKTVKQNQLVVYLKSYEKICNFLKLIQAFDGYLAFENKQLEKSFTLNQLRKSNLEVANLMKTIRSNNQTNQLQLKSFIKSSSFAKRPLNFQRYCLIKSDHPDWSLEQIANFFFTKYNIKISRSGIQHFSVNLKKLCQ.

A DNA-binding region (H-T-H motif) is located at residues 247–279 (SLEQIANFFFTKYNIKISRSGIQHFSVNLKKLC).

Belongs to the WhiA family.

Functionally, involved in cell division and chromosome segregation. The chain is Probable cell division protein WhiA from Mycoplasma genitalium (strain ATCC 33530 / DSM 19775 / NCTC 10195 / G37) (Mycoplasmoides genitalium).